A 122-amino-acid polypeptide reads, in one-letter code: Large ribosomal subunit protein uL14 (122 aa).

This sequence belongs to the universal ribosomal protein uL14 family. In terms of assembly, part of the 50S ribosomal subunit. Forms a cluster with proteins L3 and L19. In the 70S ribosome, L14 and L19 interact and together make contacts with the 16S rRNA in bridges B5 and B8.

Binds to 23S rRNA. Forms part of two intersubunit bridges in the 70S ribosome. This is Large ribosomal subunit protein uL14 from Paracidovorax citrulli (strain AAC00-1) (Acidovorax citrulli).